Consider the following 293-residue polypeptide: MARAIWKGAISFGLVHIPVSLSAATSSQGIDFDWLDQRSMEPVGYKRVNKVTGKEIERENIVKGVEYEKGRYVVLSEEEIRAAHPKSTQTIEIFAFVDSQEIPLQHFDTPYYLVPDRRGGKVYALLRETLERTGKVALANVVLHTRQHLALLRPLQDALVLITLRWPSQVRSLDGLELDESVTEAKLDKRELEMAKRLVEDMASHWEPDEYKDSFSDKIMKLVEEKAAKGQLHAVEEEEEVAGKGADIIDLTDLLKRSLRSRAGGGKDKGSEKAGADAKGRAKSGASRSRRKA.

The Ku domain maps to 10–195 (ISFGLVHIPV…KLDKRELEMA (186 aa)). The interval 216 to 229 (SDKIMKLVEEKAAK) is required for dimerization. A disordered region spans residues 260–293 (RSRAGGGKDKGSEKAGADAKGRAKSGASRSRRKA). The span at 265–280 (GGKDKGSEKAGADAKG) shows a compositional bias: basic and acidic residues.

It belongs to the prokaryotic Ku family. In terms of assembly, homodimer, may form higher-order multimers on DNA. Non-dimerized protein does not stimulate LigD ligase activity. Probably interacts with LigD.

In terms of biological role, with LigD forms a non-homologous end joining (NHEJ) DNA repair enzyme, which repairs dsDNA breaks with reduced fidelity. Stimulates rNTP addition to DSB and end joining (ligation) of linear DNA by LigD, on 3'-overhangs and probably also 5'-overhangs and blunt dsDNA breaks. Binds both ends of linear dsDNA protecting it from exonuclease activity. In Pseudomonas aeruginosa (strain ATCC 15692 / DSM 22644 / CIP 104116 / JCM 14847 / LMG 12228 / 1C / PRS 101 / PAO1), this protein is Non-homologous end joining protein Ku.